Here is a 315-residue protein sequence, read N- to C-terminus: Methionyl-tRNA formyltransferase (315 aa).

113-116 serves as a coordination point for (6S)-5,6,7,8-tetrahydrofolate; the sequence is SLLP.

It belongs to the Fmt family.

The catalysed reaction is L-methionyl-tRNA(fMet) + (6R)-10-formyltetrahydrofolate = N-formyl-L-methionyl-tRNA(fMet) + (6S)-5,6,7,8-tetrahydrofolate + H(+). Attaches a formyl group to the free amino group of methionyl-tRNA(fMet). The formyl group appears to play a dual role in the initiator identity of N-formylmethionyl-tRNA by promoting its recognition by IF2 and preventing the misappropriation of this tRNA by the elongation apparatus. This Escherichia fergusonii (strain ATCC 35469 / DSM 13698 / CCUG 18766 / IAM 14443 / JCM 21226 / LMG 7866 / NBRC 102419 / NCTC 12128 / CDC 0568-73) protein is Methionyl-tRNA formyltransferase.